The sequence spans 51 residues: MARNKPLGRKLRLARALKSNRAIPVWVVIRTSRRIRFNLLRRHWRRSKLKV.

It belongs to the eukaryotic ribosomal protein eL39 family.

The chain is Large ribosomal subunit protein eL39 (rpl39e) from Aeropyrum pernix (strain ATCC 700893 / DSM 11879 / JCM 9820 / NBRC 100138 / K1).